Consider the following 231-residue polypeptide: Ninja-family protein AFP3 (231 aa).

The span at 83–96 shows a compositional bias: basic residues; it reads AKRKRSEKQRKHKA. The tract at residues 83–152 is disordered; sequence AKRKRSEKQR…SAQSQPENLG (70 aa). The segment covering 130-152 has biased composition (polar residues); that stretch reads QATTNKSVETSPSSAQSQPENLG.

Belongs to the Ninja family. As to quaternary structure, forms a heterodimer with AFP2. Interacts with ABI5/DPBF1, DPBF2, AREB3/DPBF3, EEL/DPBF4, ABF1, ABF3/DPBF5 and ABF4/AREB2.

The protein resides in the nucleus. Its function is as follows. Acts as a negative regulator of abscisic acid (ABA) response and stress responses. This chain is Ninja-family protein AFP3 (AFP3), found in Arabidopsis thaliana (Mouse-ear cress).